The sequence spans 168 residues: Photosystem I assembly protein Ycf3 (168 aa).

3 TPR repeats span residues 35-68, 72-105, and 120-153; these read AFTYYRDGMSAQSEGNYAEALQNYYEATRLEIDP, SYILYNIGLIHTSNGEHTKALEYYFRALERNPFL, and GEQAIRQGDSEIAEAWSDQAAEYWKQAIALTPGN.

The protein belongs to the Ycf3 family.

It is found in the plastid. It localises to the chloroplast thylakoid membrane. Functionally, essential for the assembly of the photosystem I (PSI) complex. May act as a chaperone-like factor to guide the assembly of the PSI subunits. This chain is Photosystem I assembly protein Ycf3, found in Ranunculus macranthus (Large buttercup).